A 924-amino-acid chain; its full sequence is Cell division control protein 13 (924 aa).

The tract at residues 265-336 (PTTDISNMGE…KRKRKLSFHS (72 aa)) is disordered. Over residues 295–308 (GKYFSSKSYIQSQT) the composition is skewed to polar residues. Ser-306 carries the post-translational modification Phosphoserine. Thr-308 is subject to Phosphothreonine. A compositionally biased stretch (basic and acidic residues) spans 309–326 (PERKTSVPNNWHDDDSGS). Phosphoserine is present on Ser-333. A DNA-binding region (OB) is located at residues 500–686 (KMARKDPTIE…FEEYRRFFPI (187 aa)).

In terms of assembly, interacts with POL1, EST1, FUN12, STM1, STN1 and TEN1.

The protein localises to the chromosome. It is found in the telomere. Single-stranded telomeric DNA-binding protein that regulates telomere replication. Has a role in both positive and negative regulation. Promotes [TG(1-3)] strand lengthening via interaction with EST1. Promotes [C(1-3)A] strand re-synthesis by DNA polymerase alpha via interaction with POL1. Negatively regulates telomere elongation of the G strand via binding with STN1 thereby inhibiting telomerase activity. In Saccharomyces cerevisiae (strain ATCC 204508 / S288c) (Baker's yeast), this protein is Cell division control protein 13 (CDC13).